We begin with the raw amino-acid sequence, 617 residues long: Elongation factor 4 (617 aa).

Residues 17–198 enclose the tr-type G domain; that stretch reads AIIRNFCIIA…KIVRDLPAPV (182 aa). Residues 29–34 and 145–148 contribute to the GTP site; these read DHGKST and NKID.

This sequence belongs to the TRAFAC class translation factor GTPase superfamily. Classic translation factor GTPase family. LepA subfamily.

The protein localises to the cell membrane. It catalyses the reaction GTP + H2O = GDP + phosphate + H(+). Required for accurate and efficient protein synthesis under certain stress conditions. May act as a fidelity factor of the translation reaction, by catalyzing a one-codon backward translocation of tRNAs on improperly translocated ribosomes. Back-translocation proceeds from a post-translocation (POST) complex to a pre-translocation (PRE) complex, thus giving elongation factor G a second chance to translocate the tRNAs correctly. Binds to ribosomes in a GTP-dependent manner. The protein is Elongation factor 4 of Paenarthrobacter aurescens (strain TC1).